Reading from the N-terminus, the 353-residue chain is Uroporphyrinogen decarboxylase (353 aa).

Substrate contacts are provided by residues 25–29 (RQAGR), D74, Y151, S206, and H325.

It belongs to the uroporphyrinogen decarboxylase family. Homodimer.

The protein resides in the cytoplasm. The enzyme catalyses uroporphyrinogen III + 4 H(+) = coproporphyrinogen III + 4 CO2. It participates in porphyrin-containing compound metabolism; protoporphyrin-IX biosynthesis; coproporphyrinogen-III from 5-aminolevulinate: step 4/4. Catalyzes the decarboxylation of four acetate groups of uroporphyrinogen-III to yield coproporphyrinogen-III. The polypeptide is Uroporphyrinogen decarboxylase (Chloroherpeton thalassium (strain ATCC 35110 / GB-78)).